The chain runs to 1244 residues: SWI/SNF chromatin remodeling complex subunit swsn-7 (1244 aa).

Residues 24–116 (QRKMAEFYNS…YLSKFEQVET (93 aa)) enclose the ARID domain. A compositionally biased stretch (polar residues) spans 486–496 (FTQGSNQQQNP). Disordered regions lie at residues 486–534 (FTQG…GAAP), 556–583 (NREQYSTQSSQPHPPHTNVPPSPSILAH), and 597–619 (DRRTGNLPVRPIAPSTNSGESQL). Residues 497–508 (HHSQGGHQLGHS) are compositionally biased toward low complexity. Residues 556–566 (NREQYSTQSSQ) are compositionally biased toward polar residues. The span at 567-578 (PHPPHTNVPPSP) shows a compositional bias: pro residues. Positions 610–619 (PSTNSGESQL) are enriched in polar residues. Positions 623–697 (TEKWIRQNCV…IVAQGIRLIR (75 aa)) form a DNA-binding region, RFX-type winged-helix. Residues 1134–1244 (EEEQQKMLSE…TTPVRAGAGI (111 aa)) form a disordered region. Residues 1142-1158 (SEVPSSASLSSMAGSSS) show a composition bias toward low complexity. Composition is skewed to polar residues over residues 1159–1186 (QLPTVPDSPTSSVASAPMKESTSVSNKP) and 1194–1212 (LNFSSLNEKTPTSPQFTAG). Over residues 1220–1231 (PIQQHIPSQPSP) the composition is skewed to low complexity.

In terms of assembly, component of the SWI/SNF-B (PBAF) chromatin remodeling complex.

It is found in the nucleus. Involved in transcriptional activation and repression of select genes by chromatin remodeling (alteration of DNA-nucleosome topology). Required for the stability of the SWI/SNF chromatin remodeling complex SWI/SNF-B (PBAF). Required for regulation of a stress response gene network, probably as part of the PBAF complex and perhaps acting in concert with histone demethylase jmjc-1. Binds to the ethanol and stress response elements (ESRE) in the promoter regions of hsp-16.1 and hsp-16.2, probably as part of the PBAF complex. This is SWI/SNF chromatin remodeling complex subunit swsn-7 from Caenorhabditis elegans.